The primary structure comprises 596 residues: Beta-fructofuranosidase, insoluble isoenzyme 7 (596 aa).

A signal peptide spans 1–24 (MARLGLAVCAASFHLFLLLASTSS). Residues 51–54 (WQND), Gln-70, and Trp-78 each bind substrate. Asp-54 is a catalytic residue. Asn-82 carries an N-linked (GlcNAc...) asparagine glycan. Substrate-binding positions include 115–116 (WS), 179–180 (RD), and Glu-234. A glycan (N-linked (GlcNAc...) asparagine) is linked at Asn-330. An intrachain disulfide couples Cys-432 to Cys-478. N-linked (GlcNAc...) asparagine glycosylation is present at Asn-552.

It belongs to the glycosyl hydrolase 32 family.

The protein localises to the secreted. The protein resides in the extracellular space. It localises to the apoplast. It is found in the cell wall. The catalysed reaction is Hydrolysis of terminal non-reducing beta-D-fructofuranoside residues in beta-D-fructofuranosides.. Functionally, may play a role in sucrose partitioning during seed development. In Oryza sativa subsp. indica (Rice), this protein is Beta-fructofuranosidase, insoluble isoenzyme 7 (CIN7).